A 355-amino-acid polypeptide reads, in one-letter code: S-methyl-5'-thioadenosine phosphorylase (355 aa).

Phosphate contacts are provided by residues T45, 91–92 (RH), and 124–125 (SA). M226 is a substrate binding site. S227 is a phosphate binding site. 250-252 (DYD) is a substrate binding site.

Belongs to the PNP/MTAP phosphorylase family. MTAP subfamily. Homotrimer.

The protein resides in the cytoplasm. It is found in the nucleus. The enzyme catalyses S-methyl-5'-thioadenosine + phosphate = 5-(methylsulfanyl)-alpha-D-ribose 1-phosphate + adenine. It participates in amino-acid biosynthesis; L-methionine biosynthesis via salvage pathway; S-methyl-5-thio-alpha-D-ribose 1-phosphate from S-methyl-5'-thioadenosine (phosphorylase route): step 1/1. Functionally, catalyzes the reversible phosphorylation of S-methyl-5'-thioadenosine (MTA) to adenine and 5-methylthioribose-1-phosphate. Involved in the breakdown of MTA, a major by-product of polyamine biosynthesis. Responsible for the first step in the methionine salvage pathway after MTA has been generated from S-adenosylmethionine. Has broad substrate specificity with 6-aminopurine nucleosides as preferred substrates. This is S-methyl-5'-thioadenosine phosphorylase from Emericella nidulans (strain FGSC A4 / ATCC 38163 / CBS 112.46 / NRRL 194 / M139) (Aspergillus nidulans).